The chain runs to 341 residues: MKDLLRQENNEVADITIIGAGPIGLYAAFYAGLRTMKARVVDSLPQIGGQLTALYPKKAIYDVAGYPKIVAEALIANLAIQASQYHPEILTSTQITEIHRNGALFELFSEDGRQFLSKTVLIAAGVGAFAPRKLPMEEAVKWEGNGLFYFVQDPTVFFGKKVLIIGGGDSALDWAMALMANAEVTLIHRRDKFTAHEDSVEKVRKSPANIKTFYELKSIVGKDSPQGKELHKVVIFNNKTNEETTLEVDAILCNLGFSTNLGPIKNWGVEILNNAVKVDVNMATNVTGIYAAGDIVWHPAKLKLIATGFAEAAIAINNAKTIVEPHANFFPGHSSSSKEKK.

Residues D42, Q50, Y55, I95, F129, D294, and S335 each contribute to the FAD site.

Belongs to the ferredoxin--NADP reductase type 2 family. Homodimer. FAD serves as cofactor.

The catalysed reaction is 2 reduced [2Fe-2S]-[ferredoxin] + NADP(+) + H(+) = 2 oxidized [2Fe-2S]-[ferredoxin] + NADPH. This Chloroherpeton thalassium (strain ATCC 35110 / GB-78) protein is Ferredoxin--NADP reductase 2.